The chain runs to 112 residues: Evasin P1095 (112 aa).

Positions 1 to 23 (MELNAFTILQIAVFIAVGYHANT) are cleaved as a signal peptide. 3 cysteine pairs are disulfide-bonded: C48-C66, C52-C68, and C62-C79. An N-linked (GlcNAc...) asparagine glycan is attached at N51. Positions 89 to 112 (GDPNDDPKINEATPQTQIFEKKRK) are disordered.

The protein localises to the secreted. Its function is as follows. Salivary chemokine-binding protein which binds to host chemokine CXCL8. This Ixodes ricinus (Common tick) protein is Evasin P1095.